Consider the following 176-residue polypeptide: Large ribosomal subunit protein uL10 (176 aa).

It belongs to the universal ribosomal protein uL10 family. In terms of assembly, part of the ribosomal stalk of the 50S ribosomal subunit. The N-terminus interacts with L11 and the large rRNA to form the base of the stalk. The C-terminus forms an elongated spine to which L12 dimers bind in a sequential fashion forming a multimeric L10(L12)X complex.

Forms part of the ribosomal stalk, playing a central role in the interaction of the ribosome with GTP-bound translation factors. The chain is Large ribosomal subunit protein uL10 from Streptomyces avermitilis (strain ATCC 31267 / DSM 46492 / JCM 5070 / NBRC 14893 / NCIMB 12804 / NRRL 8165 / MA-4680).